A 920-amino-acid chain; its full sequence is DNA ligase (920 aa).

NAD(+)-binding positions include 90 to 94 (DAAYD), 139 to 140 (SL), and glutamate 173. The active-site N6-AMP-lysine intermediate is lysine 175. Positions 196, 235, 360, and 384 each coordinate NAD(+). Zn(2+)-binding residues include cysteine 481, cysteine 484, cysteine 500, and cysteine 506. The interval 662-691 (GEAAIESAETQGDTASETTGAPTGAEAPLG) is disordered. The segment covering 669–682 (AETQGDTASETTGA) has biased composition (polar residues). The BRCT domain occupies 839-920 (SLPQTLAGKT…FAQLLATGTI (82 aa)).

This sequence belongs to the NAD-dependent DNA ligase family. LigA subfamily. Requires Mg(2+) as cofactor. The cofactor is Mn(2+).

The catalysed reaction is NAD(+) + (deoxyribonucleotide)n-3'-hydroxyl + 5'-phospho-(deoxyribonucleotide)m = (deoxyribonucleotide)n+m + AMP + beta-nicotinamide D-nucleotide.. Functionally, DNA ligase that catalyzes the formation of phosphodiester linkages between 5'-phosphoryl and 3'-hydroxyl groups in double-stranded DNA using NAD as a coenzyme and as the energy source for the reaction. It is essential for DNA replication and repair of damaged DNA. The chain is DNA ligase from Bifidobacterium longum (strain DJO10A).